Reading from the N-terminus, the 410-residue chain is Lipoyl synthase, mitochondrial (410 aa).

The N-terminal 29 residues, 1 to 29, are a transit peptide targeting the mitochondrion; sequence MASTTVCSAARIRVASSQVLRSIANTRTY. A compositionally biased stretch (polar residues) spans 29–39; it reads YATTSPESSIP. The tract at residues 29 to 49 is disordered; that stretch reads YATTSPESSIPETKPTAKRTP. The [4Fe-4S] cluster site is built by Cys129, Cys134, Cys140, Cys160, Cys164, Cys167, and Ser375. One can recognise a Radical SAM core domain in the interval 143–364; sequence GGSKAAATAT…KEKAMEMGFL (222 aa).

Belongs to the radical SAM superfamily. Lipoyl synthase family. The cofactor is [4Fe-4S] cluster.

Its subcellular location is the mitochondrion. It carries out the reaction [[Fe-S] cluster scaffold protein carrying a second [4Fe-4S](2+) cluster] + N(6)-octanoyl-L-lysyl-[protein] + 2 oxidized [2Fe-2S]-[ferredoxin] + 2 S-adenosyl-L-methionine + 4 H(+) = [[Fe-S] cluster scaffold protein] + N(6)-[(R)-dihydrolipoyl]-L-lysyl-[protein] + 4 Fe(3+) + 2 hydrogen sulfide + 2 5'-deoxyadenosine + 2 L-methionine + 2 reduced [2Fe-2S]-[ferredoxin]. It participates in protein modification; protein lipoylation via endogenous pathway; protein N(6)-(lipoyl)lysine from octanoyl-[acyl-carrier-protein]: step 2/2. In terms of biological role, catalyzes the radical-mediated insertion of two sulfur atoms into the C-6 and C-8 positions of the octanoyl moiety bound to the lipoyl domains of lipoate-dependent enzymes, thereby converting the octanoylated domains into lipoylated derivatives. This Arthroderma otae (strain ATCC MYA-4605 / CBS 113480) (Microsporum canis) protein is Lipoyl synthase, mitochondrial.